A 516-amino-acid chain; its full sequence is Maturase K (516 aa).

It belongs to the intron maturase 2 family. MatK subfamily.

It localises to the plastid. It is found in the chloroplast. Its function is as follows. Usually encoded in the trnK tRNA gene intron. Probably assists in splicing its own and other chloroplast group II introns. This Disporum sessile (Japanese fairy bells) protein is Maturase K.